The following is a 480-amino-acid chain: Prostacyclin synthase (480 aa).

Residues 1–21 (MMWTALLLVGLSILVIVLYGR) form a helical membrane-spanning segment. Residues R104, L110, N277, 338–339 (TR), and R362 each bind substrate. C421 provides a ligand contact to heme.

This sequence belongs to the cytochrome P450 family. The cofactor is heme.

The protein localises to the endoplasmic reticulum membrane. The catalysed reaction is prostaglandin H2 = prostaglandin I2. It carries out the reaction a hydroperoxyeicosatetraenoate = an oxoeicosatetraenoate + H2O. It catalyses the reaction (15S)-hydroperoxy-(5Z,8Z,11Z,13E)-eicosatetraenoate = 15-oxo-(5Z,8Z,11Z,13E)-eicosatetraenoate + H2O. The enzyme catalyses (15S)-hydroperoxy-(5Z,8Z,11Z,13E)-eicosatetraenoate + AH2 = (15S)-hydroxy-(5Z,8Z,11Z,13E)-eicosatetraenoate + A + H2O. Catalyzes the isomerization of prostaglandin H2 to prostacyclin (= prostaglandin I2). Functionally, catalyzes the biosynthesis and metabolism of eicosanoids. Catalyzes the isomerization of prostaglandin H2 to prostacyclin (= prostaglandin I2), a potent mediator of vasodilation and inhibitor of platelet aggregation. Additionally, displays dehydratase activity, toward hydroperoxyeicosatetraenoates (HPETEs), especially toward (15S)-hydroperoxy-(5Z,8Z,11Z,13E)-eicosatetraenoate (15(S)-HPETE). The sequence is that of Prostacyclin synthase from Danio rerio (Zebrafish).